The primary structure comprises 891 residues: UPF0182 protein Glov_0814 (891 aa).

A run of 7 helical transmembrane segments spans residues 6–26 (LTPI…LLAY), 51–71 (GIGV…LLYA), 102–122 (IGVL…ALQW), 164–184 (FMLL…GGIA), 202–222 (ILLA…GFGL), 244–264 (TLTT…FGLW), and 266–286 (GTWR…MIGM).

It belongs to the UPF0182 family.

Its subcellular location is the cell membrane. The protein is UPF0182 protein Glov_0814 of Trichlorobacter lovleyi (strain ATCC BAA-1151 / DSM 17278 / SZ) (Geobacter lovleyi).